The following is a 411-amino-acid chain: LL-diaminopimelate aminotransferase (411 aa).

The substrate site is built by tyrosine 16 and glycine 43. Residues tyrosine 73, 109–110, tyrosine 133, asparagine 188, tyrosine 219, and 247–249 each bind pyridoxal 5'-phosphate; these read AK and SYS. 3 residues coordinate substrate: lysine 110, tyrosine 133, and asparagine 188. Lysine 250 bears the N6-(pyridoxal phosphate)lysine mark. 2 residues coordinate pyridoxal 5'-phosphate: arginine 258 and asparagine 293. The substrate site is built by asparagine 293 and arginine 389.

It belongs to the class-I pyridoxal-phosphate-dependent aminotransferase family. LL-diaminopimelate aminotransferase subfamily. Homodimer. It depends on pyridoxal 5'-phosphate as a cofactor.

It catalyses the reaction (2S,6S)-2,6-diaminopimelate + 2-oxoglutarate = (S)-2,3,4,5-tetrahydrodipicolinate + L-glutamate + H2O + H(+). Its pathway is amino-acid biosynthesis; L-lysine biosynthesis via DAP pathway; LL-2,6-diaminopimelate from (S)-tetrahydrodipicolinate (aminotransferase route): step 1/1. Its function is as follows. Involved in the synthesis of meso-diaminopimelate (m-DAP or DL-DAP), required for both lysine and peptidoglycan biosynthesis. Catalyzes the direct conversion of tetrahydrodipicolinate to LL-diaminopimelate. This chain is LL-diaminopimelate aminotransferase, found in Methanosphaera stadtmanae (strain ATCC 43021 / DSM 3091 / JCM 11832 / MCB-3).